A 932-amino-acid chain; its full sequence is MLKGDPSEKTKKRYQARVDAVNALGARTKALSDDELRAKTEEFRERLRRGESEDDLLVEAFAVVREAADRVLGLRPFDVQLIGGMILHEGQIAEMRTGEGKTLVSALPAYLNALSGKGVHVVTVNDYLARRDAEWIGQIHKFLGMTCGLIQAGMAEEERRVGYGSDVTYVTNSELGFDYLRDNLAQNTGELVQRDFNFCIIDEVDSILIDEARTPLIISGVADKPSERYIQAAKIADAFEKDYHYKVDEKQKSVLLSEEGYEAAEDLLQVTDLYDPRTQWALYIINAIKAKELQKRDVNYIVRGQEIIIVDEFSGRTMQGRRWSDGLHQAVEAKEGVTIQNETVTIASVTYQAFFKSYPKLGGMTGTAETEITEFSNIYELEVAVVPTNRPVSREDSTDVVFRSETGKWNAVRKEISRMHKKGRPVLVGTTSVERSEQIAELLDEDGIPYELLNAKPENVERESEIVAQSGRKGAVTIATNMAGRGTDILLGGNAEFMARLRVRESLMQRVVMPEDGEIAFEKKGNLAKSGGNKWAVKEGLYPCELSAETAKMLGEAVDTACSVWGDRSLEALDAEERLSFACEKGPSEDEAILALRKVFNAIEAEYKVYTSAEKKEVLGLGGLHVVGTERHESRRVDNQLRGRSGRQGDPGSTRYFLSLEDNLFRIFGGDRIQALMSAFRVEDMPIESGMLTNSLDEAQKKVERYFYDIRKQLFDYDAVLNSQREKVYFERRRALTASREQLQEQMLEYAELTIDDIVNANIDTSEPVSEWPLEGLVGKLRQYCYYFGEIDESDIRPIAEKGGVNALRNFLVKKGQDAYMTKCGEVEATEAGLMMEAERFFILSQTDNLWKQHLQAIKFVQQAVGLRGYAQKDPLIEYKLEGFNLYTEMMAQIRRNVIYSVYMFQPQRLEQKEEAELVGAGGDQKPNSRKK.

Residue 95-102 (MRTGEGKT) participates in ATP binding. Positions 632–641 (HESRRVDNQL) are enriched in basic and acidic residues. The tract at residues 632-653 (HESRRVDNQLRGRSGRQGDPGS) is disordered.

The protein belongs to the SecA family.

The protein localises to the plastid. Its subcellular location is the chloroplast stroma. The protein resides in the chloroplast thylakoid membrane. The catalysed reaction is ATP + H2O + chloroplast-proteinSide 1 = ADP + phosphate + chloroplast-proteinSide 2.. In terms of biological role, has a central role in coupling the hydrolysis of ATP to the transfer of proteins across the thylakoid membrane. This is Protein translocase subunit SecA, chloroplastic from Ostreococcus lucimarinus (strain CCE9901).